A 698-amino-acid chain; its full sequence is Iron-sulfur clusters transporter ATM1, mitochondrial (698 aa).

The transit peptide at 1 to 23 directs the protein to the mitochondrion; the sequence is MIPQLLQRSSRACPRYNPALYRL. Topologically, residues 24-113 are mitochondrial matrix; that stretch reads STTSQQRPGL…PKDDWGTKLR (90 aa). Residues 32–63 form a disordered region; sequence GLTQTFWTSAPRREQPRTPTDSKPTTTKPSAV. The segment covering 48 to 61 has biased composition (low complexity); that stretch reads RTPTDSKPTTTKPS. The chain crosses the membrane as a helical span at residues 114-135; sequence VSLAVSLLIGAKVLNVQVPFYF. An ABC transmembrane type-1 domain is found at 114-404; the sequence is VSLAVSLLIG…LGSVYRELRQ (291 aa). Topologically, residues 136-158 are mitochondrial intermembrane; that stretch reads KSIVDSMNIDVAAVGGTATTVAG. A helical transmembrane segment spans residues 159 to 182; sequence AMILAYGASRIGATVFQELRNAVF. The Mitochondrial matrix segment spans residues 183–231; the sequence is ASVAQNAIRKVACNVFDHLLRLDLTFHLSKQTGGLTRALDRGTKGISFI. A helical membrane pass occupies residues 232–255; sequence LSSMVFHVLPTALEISMVCGILTY. Position 256 (N256) is a topological domain, mitochondrial intermembrane. A helical transmembrane segment spans residues 257 to 277; it reads YGAKFAALTVLTMVSYTAFTI. The Mitochondrial matrix segment spans residues 278 to 343; that stretch reads WTTAWRTKFR…NSIKVATSLA (66 aa). Residues 283–287 and 346–349 each bind glutathione; these read RTKFR and NSGQ. The chain crosses the membrane as a helical span at residues 344–362; the sequence is LLNSGQNIIFSSALTGMMY. Residues 363 to 377 are Mitochondrial intermembrane-facing; that stretch reads LAANGVAEGTLTVGD. A helical membrane pass occupies residues 378–399; sequence LVMVNQLVFQLSVPLNFLGSVY. Residue G396 coordinates glutathione. Over 400-698 the chain is Mitochondrial matrix; it reads RELRQSLLDM…EEENDEQKKN (299 aa). Residues 439–675 form the ABC transporter domain; that stretch reads IKFENVNFAY…DGVYAELWSA (237 aa). Residues Y448 and 472–483 each bind ATP; that span reads GPSGCGKSTLLR. The disordered stretch occupies residues 679-698; that stretch reads MFGEDGKEKSEEENDEQKKN. Basic and acidic residues predominate over residues 682-698; it reads EDGKEKSEEENDEQKKN.

It belongs to the ABC transporter superfamily. ABCB family. Heavy Metal importer (TC 3.A.1.210) subfamily. As to quaternary structure, homodimer.

The protein resides in the mitochondrion inner membrane. In terms of biological role, performs an essential function in the generation of cytoplasmic iron-sulfur proteins by mediating the ATP-dependent export of Fe/S cluster precursors synthesized by NFS1 and other mitochondrial proteins. Hydrolyzes ATP. Binds glutathione and may function by transporting a glutathione-conjugated iron-sulfur compound. This Gibberella zeae (strain ATCC MYA-4620 / CBS 123657 / FGSC 9075 / NRRL 31084 / PH-1) (Wheat head blight fungus) protein is Iron-sulfur clusters transporter ATM1, mitochondrial.